Consider the following 309-residue polypeptide: MANRPLVPGVYVPTVAFFAENEDVDVATVEKHAAYLAKSGVAGIVVQGSNGEAVHLDREERNLITSATRHALDSVGATSMPVIVGTGAPSTRETINLCKDAAAAGGDYVLVLPPSYYKSLVSSAALLDHFRAVADASPIPVLIYNFPGASAGLDLSSDDILALSSHPNIIGTKLTCGNTGKLTRIVAQAGPSFLTFGGSCDFTLQTLIGGGAGVIAGTANIIPRACVRIMELYRAGRVEEAQKVQAIVARADWLAIKGGFVAVKSALQSYRGYGQQPRRPCVAPSSEEAAALKEAFSESIELERQLESQ.

Residue 49–50 participates in substrate binding; it reads SN. K173 serves as the catalytic Schiff-base intermediate with substrate.

Belongs to the DapA family.

It carries out the reaction (4S)-4-hydroxy-2-oxoglutarate = glyoxylate + pyruvate. The enzyme catalyses (4R)-4-hydroxy-2-oxoglutarate = glyoxylate + pyruvate. Its activity is regulated as follows. Inhibited by divalent cations. Its function is as follows. Catalyzes the final step in the metabolic pathway of hydroxyproline. Involved in osmoadaptation. The chain is Probable 4-hydroxy-2-oxoglutarate aldolase, mitochondrial from Emericella nidulans (strain FGSC A4 / ATCC 38163 / CBS 112.46 / NRRL 194 / M139) (Aspergillus nidulans).